The sequence spans 326 residues: N-acetyl-gamma-glutamyl-phosphate reductase (326 aa).

Residue Cys155 is part of the active site.

Belongs to the NAGSA dehydrogenase family. Type 1 subfamily.

Its subcellular location is the cytoplasm. The enzyme catalyses N-acetyl-L-glutamate 5-semialdehyde + phosphate + NADP(+) = N-acetyl-L-glutamyl 5-phosphate + NADPH + H(+). Its pathway is amino-acid biosynthesis; L-arginine biosynthesis; N(2)-acetyl-L-ornithine from L-glutamate: step 3/4. Functionally, catalyzes the NADPH-dependent reduction of N-acetyl-5-glutamyl phosphate to yield N-acetyl-L-glutamate 5-semialdehyde. This is N-acetyl-gamma-glutamyl-phosphate reductase from Shewanella woodyi (strain ATCC 51908 / MS32).